A 280-amino-acid polypeptide reads, in one-letter code: Putative S-adenosyl-L-methionine-dependent methyltransferase FRAAL3836 (280 aa).

S-adenosyl-L-methionine-binding positions include Asp-121 and 150–151 (DL).

This sequence belongs to the UPF0677 family.

Functionally, exhibits S-adenosyl-L-methionine-dependent methyltransferase activity. The polypeptide is Putative S-adenosyl-L-methionine-dependent methyltransferase FRAAL3836 (Frankia alni (strain DSM 45986 / CECT 9034 / ACN14a)).